Here is a 461-residue protein sequence, read N- to C-terminus: 3-oxoacyl-[acyl-carrier-protein] synthase, mitochondrial (461 aa).

The N-terminal 28 residues, 1-28, are a transit peptide targeting the mitochondrion; sequence MATSNLRRHLSASRLRLNRFISTSSSYH. The region spanning 30–460 is the Ketosynthase family 3 (KS3) domain; the sequence is HRRVVVTGLG…GTNASLLFAS (431 aa). Catalysis depends on for beta-ketoacyl synthase activity residues Cys209, His350, and His389.

Belongs to the thiolase-like superfamily. Beta-ketoacyl-ACP synthases family. In terms of assembly, homodimer. Expressed at the same level in leaves, roots, siliques and flowers.

The protein resides in the mitochondrion. The catalysed reaction is a fatty acyl-[ACP] + malonyl-[ACP] + H(+) = a 3-oxoacyl-[ACP] + holo-[ACP] + CO2. The enzyme catalyses butanoyl-[ACP] + malonyl-[ACP] + H(+) = 3-oxohexanoyl-[ACP] + holo-[ACP] + CO2. It catalyses the reaction hexanoyl-[ACP] + malonyl-[ACP] + H(+) = 3-oxooctanoyl-[ACP] + holo-[ACP] + CO2. It carries out the reaction octanoyl-[ACP] + malonyl-[ACP] + H(+) = 3-oxodecanoyl-[ACP] + holo-[ACP] + CO2. The catalysed reaction is decanoyl-[ACP] + malonyl-[ACP] + H(+) = 3-oxododecanoyl-[ACP] + holo-[ACP] + CO2. The enzyme catalyses dodecanoyl-[ACP] + malonyl-[ACP] + H(+) = 3-oxotetradecanoyl-[ACP] + holo-[ACP] + CO2. It catalyses the reaction tetradecanoyl-[ACP] + malonyl-[ACP] + H(+) = 3-oxohexadecanoyl-[ACP] + holo-[ACP] + CO2. It carries out the reaction hexadecanoyl-[ACP] + malonyl-[ACP] + H(+) = 3-oxooctadecanoyl-[ACP] + holo-[ACP] + CO2. It functions in the pathway lipid metabolism; fatty acid biosynthesis. Inhibited by cerulenin. Catalyzes all the condensation reaction of fatty acid synthesis by the addition to an acyl acceptor of two carbons from malonyl-ACP. Able to elongate saturated acyl chains from 4 to at least 16 carbons. Uses malonyl-CoA but not acetyl-CoA as primer substrate. When expressed in a heterologous system, reveals a bimodal distribution of products, with peaks at C8 and C14-C16. The major product of the reaction (octanoyl-ACP) is required for the lipoylation of essential mitochondrial proteins. Required for mitochondrial fatty acid synthesis (mtFAS). MtFAS are essential for photorespiration and plant development, probably by influencing mitochondrial membrane lipid composition and other lipid metabolic pathways. This Arabidopsis thaliana (Mouse-ear cress) protein is 3-oxoacyl-[acyl-carrier-protein] synthase, mitochondrial.